The chain runs to 574 residues: Acetolactate synthase large subunit (574 aa).

Glu-51 contacts thiamine diphosphate. FAD-binding positions include Arg-153, 261 to 282 (HGTYEANMAMHYADVILAIGVR), and 304 to 323 (DIDPTSISKTITAHIPIVGN). The tract at residues 397 to 477 (QHQMFAALYY…ILILNLNNKS (81 aa)) is thiamine pyrophosphate binding. Mg(2+) contacts are provided by Asp-448 and Asn-475.

It belongs to the TPP enzyme family. Dimer of large and small chains. It depends on Mg(2+) as a cofactor. Thiamine diphosphate is required as a cofactor.

It catalyses the reaction 2 pyruvate + H(+) = (2S)-2-acetolactate + CO2. Its pathway is amino-acid biosynthesis; L-isoleucine biosynthesis; L-isoleucine from 2-oxobutanoate: step 1/4. It participates in amino-acid biosynthesis; L-valine biosynthesis; L-valine from pyruvate: step 1/4. This is Acetolactate synthase large subunit (ilvI) from Buchnera aphidicola subsp. Schlechtendalia chinensis.